Here is a 327-residue protein sequence, read N- to C-terminus: Tyrosine--tRNA ligase (327 aa).

Tyr-33 lines the L-tyrosine pocket. Residues 38–46 (PSGVLHLGH) carry the 'HIGH' region motif. L-tyrosine is bound by residues Tyr-154, Gln-158, Asp-161, and Gln-176. Positions 212–216 (KMSSS) match the 'KMSKS' region motif. Ser-215 contributes to the ATP binding site.

The protein belongs to the class-I aminoacyl-tRNA synthetase family. TyrS type 3 subfamily. As to quaternary structure, homodimer.

It localises to the cytoplasm. It carries out the reaction tRNA(Tyr) + L-tyrosine + ATP = L-tyrosyl-tRNA(Tyr) + AMP + diphosphate + H(+). In terms of biological role, catalyzes the attachment of tyrosine to tRNA(Tyr) in a two-step reaction: tyrosine is first activated by ATP to form Tyr-AMP and then transferred to the acceptor end of tRNA(Tyr). This chain is Tyrosine--tRNA ligase, found in Halobacterium salinarum (strain ATCC 29341 / DSM 671 / R1).